We begin with the raw amino-acid sequence, 411 residues long: Serine hydroxymethyltransferase (411 aa).

A (6S)-5,6,7,8-tetrahydrofolate-binding site is contributed by Gly-120–Leu-122. Lys-225 carries the N6-(pyridoxal phosphate)lysine modification. (6S)-5,6,7,8-tetrahydrofolate-binding positions include Glu-241 and Ser-350 to Phe-352.

The protein belongs to the SHMT family. In terms of assembly, homodimer. Pyridoxal 5'-phosphate is required as a cofactor.

It localises to the cytoplasm. It catalyses the reaction (6R)-5,10-methylene-5,6,7,8-tetrahydrofolate + glycine + H2O = (6S)-5,6,7,8-tetrahydrofolate + L-serine. Its pathway is one-carbon metabolism; tetrahydrofolate interconversion. It participates in amino-acid biosynthesis; glycine biosynthesis; glycine from L-serine: step 1/1. Catalyzes the reversible interconversion of serine and glycine with tetrahydrofolate (THF) serving as the one-carbon carrier. This reaction serves as the major source of one-carbon groups required for the biosynthesis of purines, thymidylate, methionine, and other important biomolecules. Also exhibits THF-independent aldolase activity toward beta-hydroxyamino acids, producing glycine and aldehydes, via a retro-aldol mechanism. The protein is Serine hydroxymethyltransferase of Limosilactobacillus fermentum (strain NBRC 3956 / LMG 18251) (Lactobacillus fermentum).